Reading from the N-terminus, the 425-residue chain is Trigger factor (425 aa).

In terms of domain architecture, PPIase FKBP-type spans 163 to 248 (GDTAVIDFEG…IHEIKTKELP (86 aa)).

Belongs to the FKBP-type PPIase family. Tig subfamily.

The protein localises to the cytoplasm. The catalysed reaction is [protein]-peptidylproline (omega=180) = [protein]-peptidylproline (omega=0). Functionally, involved in protein export. Acts as a chaperone by maintaining the newly synthesized protein in an open conformation. Functions as a peptidyl-prolyl cis-trans isomerase. In Bacillus mycoides (strain KBAB4) (Bacillus weihenstephanensis), this protein is Trigger factor.